A 207-amino-acid chain; its full sequence is Large ribosomal subunit protein uL4 (207 aa).

It belongs to the universal ribosomal protein uL4 family. In terms of assembly, part of the 50S ribosomal subunit.

In terms of biological role, one of the primary rRNA binding proteins, this protein initially binds near the 5'-end of the 23S rRNA. It is important during the early stages of 50S assembly. It makes multiple contacts with different domains of the 23S rRNA in the assembled 50S subunit and ribosome. Forms part of the polypeptide exit tunnel. The chain is Large ribosomal subunit protein uL4 from Pelagibacter ubique (strain HTCC1062).